A 449-amino-acid chain; its full sequence is Tol-Pal system protein TolB (449 aa).

The first 36 residues, 1–36 (MDCPNMPLHINRRQMLLSAATAAGALALGPARDAFG), serve as a signal peptide directing secretion.

The protein belongs to the TolB family. The Tol-Pal system is composed of five core proteins: the inner membrane proteins TolA, TolQ and TolR, the periplasmic protein TolB and the outer membrane protein Pal. They form a network linking the inner and outer membranes and the peptidoglycan layer.

The protein resides in the periplasm. Its function is as follows. Part of the Tol-Pal system, which plays a role in outer membrane invagination during cell division and is important for maintaining outer membrane integrity. The sequence is that of Tol-Pal system protein TolB from Rhodopseudomonas palustris (strain HaA2).